We begin with the raw amino-acid sequence, 256 residues long: Biosynthetic peptidoglycan transglycosylase (256 aa).

Residues 26–48 form a helical membrane-spanning segment; it reads VARWLAYVGGVFAGAWLATQLYY.

It belongs to the glycosyltransferase 51 family.

It is found in the cell inner membrane. It carries out the reaction [GlcNAc-(1-&gt;4)-Mur2Ac(oyl-L-Ala-gamma-D-Glu-L-Lys-D-Ala-D-Ala)](n)-di-trans,octa-cis-undecaprenyl diphosphate + beta-D-GlcNAc-(1-&gt;4)-Mur2Ac(oyl-L-Ala-gamma-D-Glu-L-Lys-D-Ala-D-Ala)-di-trans,octa-cis-undecaprenyl diphosphate = [GlcNAc-(1-&gt;4)-Mur2Ac(oyl-L-Ala-gamma-D-Glu-L-Lys-D-Ala-D-Ala)](n+1)-di-trans,octa-cis-undecaprenyl diphosphate + di-trans,octa-cis-undecaprenyl diphosphate + H(+). The protein operates within cell wall biogenesis; peptidoglycan biosynthesis. Functionally, peptidoglycan polymerase that catalyzes glycan chain elongation from lipid-linked precursors. The protein is Biosynthetic peptidoglycan transglycosylase of Burkholderia pseudomallei (strain K96243).